We begin with the raw amino-acid sequence, 716 residues long: Exocyst complex component 8 (716 aa).

Residue S15 is modified to Phosphoserine. Residues 129–150 (GFLPGPAGVPREGSGTGEEGKQ) form a disordered region. In terms of domain architecture, PH spans 173 to 273 (YLVYNGDLVE…WLEVLEETKR (101 aa)). The segment covering 275–284 (LSDKRRREQE) has biased composition (basic and acidic residues). The disordered stretch occupies residues 275 to 319 (LSDKRRREQEEAAAPRAPPPVTSKGSNPFEDEDDEELATPEAEEE). Over residues 303-319 (FEDEDDEELATPEAEEE) the composition is skewed to acidic residues. T313 bears the Phosphothreonine mark.

Belongs to the EXO84 family. As to quaternary structure, the exocyst complex is composed of EXOC1, EXOC2, EXOC3, EXOC4, EXOC5, EXOC6, EXOC7 and EXOC8. Interacts (via PH domain) with GTP-bound RALA and RALB. Interacts with SH3BP1; required for the localization of both SH3BP1 and the exocyst to the leading edge of migrating cells.

The protein resides in the cytoplasm. It localises to the perinuclear region. It is found in the cell projection. The protein localises to the growth cone. Its function is as follows. Component of the exocyst complex involved in the docking of exocytic vesicles with fusion sites on the plasma membrane. In Mus musculus (Mouse), this protein is Exocyst complex component 8 (Exoc8).